The primary structure comprises 190 residues: High affinity copper uptake protein 1 (190 aa).

A disordered region spans residues 1–35; sequence MDHSHHMGMSYMDSNSTMQPSHHHPTTSASHSHGG. Residues 1–61 lie on the Extracellular side of the membrane; it reads MDHSHHMGMS…KNVELLFSGL (61 aa). The Bis-His motif motif lies at 5–6; sequence HH. The short motif at 7–12 is the Methionine segments (Mets) motif element; the sequence is MGMSYM. N-linked (GlcNAc...) asparagine glycosylation is present at Asn15. A compositionally biased stretch (low complexity) spans 26-35; it reads TTSASHSHGG. The O-linked (GalNAc...) threonine glycan is linked to Thr27. Residues 62–82 traverse the membrane as a helical segment; that stretch reads VINTAGEMAGAFVAVFLLAMF. At 83 to 132 the chain is on the cytoplasmic side; sequence YEGLKIARESLLRKSQVSIRYNSMPVPGPNGTILMETHKTVGQQMLSFPH. Thr114 carries the post-translational modification Phosphothreonine. Residues 133–153 traverse the membrane as a helical segment; the sequence is LLQTVLHIIQVVISYFLMLIF. Residues 154–156 lie on the Extracellular side of the membrane; that stretch reads MTY. The chain crosses the membrane as a helical span at residues 157–177; that stretch reads NGYLCIAVAAGAGTGYFLFSW. At 178 to 190 the chain is on the cytoplasmic side; that stretch reads KKAVVVDITEHCH. Cys189 carries the cysteine sulfenic acid (-SOH) modification.

This sequence belongs to the copper transporter (Ctr) (TC 1.A.56) family. SLC31A subfamily. As to quaternary structure, homotrimer; is stabilized by cisplatin via interactions between cisplatin and the methionine-rich clusters, and could be crucial for the copper(2+) reduction process and copper(1+) stabilization. Heterotrimer between SLC31A1, CCS and SOD1; this heterotrimer is copper(1+)-mediated and its maintenance is regulated through SOD1 activation. Interacts with KDR; this interaction is induced upon VEGFA stimulation leading to SLC31A1 and KDR subsequent co-internalization to early endosomes, thereby activating KDR downstream signaling in endothelial cells. Interacts (via C-terminal domain) with ATOX1 (via dimer form); this interaction improves ATOX1 stability and controls intracellular copper(1+) levels. Interacts with SLC31A2; this interaction stabilizes SLC31A2 and protects its from ubiquitination and degradation. Interacts (via C-terminal domain) with CCS; this interaction is copper(1+)-mediated. In terms of processing, O-Glycosylation at Thr-27 protects from proteolytic cleavage in the N-terminal extracellular domain. Proteolytic cleavage, leading to a truncated form, is facilitated by SLC31A2 and initiated preferentially by CTSL and to a minor extend by CTSB in endolysosomal compartments. In vitro, is cleaved by CTSL/cathepsin L between residues 8 and 9 from the amino terminus. A post-CTSL/cathepsin L processing occurs to yield to the fully truncated form. Post-translationally, sulfenylated at Cys-189 after stimulation with VEGFA, which induces SLC31A1-KDR disulfide bond formation and their co-internalization to early endosomes, driving to a sustained VEGFR2 signaling.

The protein localises to the cell membrane. The protein resides in the early endosome membrane. It is found in the recycling endosome membrane. It localises to the apical cell membrane. Its subcellular location is the late endosome membrane. The protein localises to the basolateral cell membrane. The enzyme catalyses Ag(+)(out) = Ag(+)(in). The catalysed reaction is Cu(+)(out) = Cu(+)(in). With respect to regulation, copper(1+) transport is stimulated by extracellular acidic pH and high potassium ions concentrations. Copper(1+) import is regulated by a copper(1+)-dependent recycling of SLC31A1. Uniporter that mediates the transport of copper(1+) from the extracellular space to the cytoplasm, across the plasma membrane and delivers directly copper(1+) to specific chaperone such as ATOX1, via a copper(1+)- mediated transient interaction between the C-terminal domain and a copper(1+) chaperone, thus controlling intracellular copper(1+) levels. May function in copper(1+) import from the apical membrane thus may drive intestinal copper absorption. The copper(1+) transport mechanism is sodium-independent, saturable and of high-affinity. Also mediates the uptake of silver(1+). May function in the influx of the platinum-containing chemotherapeutic agents. The platinum-containing chemotherapeutic agents uptake is saturable. In vitro, mediates the transport of cadmium(2+) into cells. Also participates in the first step of copper(2+) acquisition by cells through a direct transfer of copper(2+) from copper(2+) carriers in blood, such as ALB to the N-terminal domain of SLC31A1, leading to copper(2+) reduction and probably followed by copper(1+) stabilization. In addition, functions as a redox sensor to promote angiogenesis in endothelial cells, in a copper(1+) transport independent manner, by transmitting the VEGF-induced ROS signal through a sulfenylation at Cys-189 leadin g to a subsequent disulfide bond formation between SLC31A1 and KDR. The SLC31A1-KDR complex is then co-internalized to early endosomes, driving a sustained VEGFR2 signaling. Its function is as follows. Mobilizes copper(1+) out of the endosomal compartment, making copper(1+) available for export out of the cells. The polypeptide is High affinity copper uptake protein 1 (Homo sapiens (Human)).